A 226-amino-acid chain; its full sequence is Large ribosomal subunit protein uL1 (226 aa).

Belongs to the universal ribosomal protein uL1 family. In terms of assembly, part of the 50S ribosomal subunit.

In terms of biological role, binds directly to 23S rRNA. The L1 stalk is quite mobile in the ribosome, and is involved in E site tRNA release. Protein L1 is also a translational repressor protein, it controls the translation of the L11 operon by binding to its mRNA. The protein is Large ribosomal subunit protein uL1 of Borreliella afzelii (strain PKo) (Borrelia afzelii).